A 172-amino-acid chain; its full sequence is UPF0114 protein PMI3225 (172 aa).

The next 4 membrane-spanning stretches (helical) occupy residues 15–35 (LFAP…IKFF), 57–77 (LLSL…IFSG), 108–128 (KVAA…FMDL), and 136–156 (LLWY…MGYL).

It belongs to the UPF0114 family.

It localises to the cell membrane. The chain is UPF0114 protein PMI3225 from Proteus mirabilis (strain HI4320).